A 183-amino-acid chain; its full sequence is Glutathione-regulated potassium-efflux system ancillary protein KefG (183 aa).

It belongs to the NAD(P)H dehydrogenase (quinone) family. KefG subfamily. Interacts with KefB.

The protein localises to the cell inner membrane. The catalysed reaction is a quinone + NADH + H(+) = a quinol + NAD(+). It catalyses the reaction a quinone + NADPH + H(+) = a quinol + NADP(+). Functionally, regulatory subunit of a potassium efflux system that confers protection against electrophiles. Required for full activity of KefB. This is Glutathione-regulated potassium-efflux system ancillary protein KefG from Pectobacterium atrosepticum (strain SCRI 1043 / ATCC BAA-672) (Erwinia carotovora subsp. atroseptica).